The chain runs to 441 residues: 3-phosphoshikimate 1-carboxyvinyltransferase (441 aa).

3-phosphoshikimate-binding residues include Lys26, Ser27, and Arg31. Phosphoenolpyruvate is bound at residue Lys26. The phosphoenolpyruvate site is built by Gly99 and Arg127. Positions 173, 174, 175, 203, 320, and 347 each coordinate 3-phosphoshikimate. Gln175 lines the phosphoenolpyruvate pocket. The Proton acceptor role is filled by Asp320. The phosphoenolpyruvate site is built by Arg351, Arg393, and Lys423.

Belongs to the EPSP synthase family. In terms of assembly, monomer.

It is found in the cytoplasm. The catalysed reaction is 3-phosphoshikimate + phosphoenolpyruvate = 5-O-(1-carboxyvinyl)-3-phosphoshikimate + phosphate. Its pathway is metabolic intermediate biosynthesis; chorismate biosynthesis; chorismate from D-erythrose 4-phosphate and phosphoenolpyruvate: step 6/7. In terms of biological role, catalyzes the transfer of the enolpyruvyl moiety of phosphoenolpyruvate (PEP) to the 5-hydroxyl of shikimate-3-phosphate (S3P) to produce enolpyruvyl shikimate-3-phosphate and inorganic phosphate. In Janthinobacterium sp. (strain Marseille) (Minibacterium massiliensis), this protein is 3-phosphoshikimate 1-carboxyvinyltransferase.